The primary structure comprises 343 residues: Cytoplasmic tRNA 2-thiolation protein 1 (343 aa).

It belongs to the TtcA family. CTU1/NCS6/ATPBD3 subfamily.

The protein localises to the cytoplasm. The protein operates within tRNA modification; 5-methoxycarbonylmethyl-2-thiouridine-tRNA biosynthesis. In terms of biological role, plays a central role in 2-thiolation of mcm(5)S(2)U at tRNA wobble positions of tRNA(Lys), tRNA(Glu) and tRNA(Gln). Directly binds tRNAs and probably acts by catalyzing adenylation of tRNAs, an intermediate required for 2-thiolation. It is unclear whether it acts as a sulfurtransferase that transfers sulfur from thiocarboxylated URM1 onto the uridine of tRNAs at wobble position. This is Cytoplasmic tRNA 2-thiolation protein 1 from Drosophila virilis (Fruit fly).